Here is a 128-residue protein sequence, read N- to C-terminus: Small ribosomal subunit protein uS11 (128 aa).

The protein belongs to the universal ribosomal protein uS11 family. Part of the 30S ribosomal subunit. Interacts with proteins S7 and S18. Binds to IF-3.

Its function is as follows. Located on the platform of the 30S subunit, it bridges several disparate RNA helices of the 16S rRNA. Forms part of the Shine-Dalgarno cleft in the 70S ribosome. This is Small ribosomal subunit protein uS11 from Onion yellows phytoplasma (strain OY-M).